An 859-amino-acid chain; its full sequence is ATP-dependent RNA helicase DBP4 (859 aa).

A disordered region spans residues 1-34 (MALGDKNQGSSKSQAKQKGTKGKNAQPRLKSNQL). Polar residues predominate over residues 7–17 (NQGSSKSQAKQ). The Q motif motif lies at 60–88 (TLFSELPMSSKTQKGLKSSHFLNPTPIQS). The 184-residue stretch at 91–274 (IPPALQARDI…KLSLYEPLYI (184 aa)) folds into the Helicase ATP-binding domain. Residue 104–111 (AKTGSGKT) coordinates ATP. The DEAD box signature appears at 213 to 216 (DEAD). Residues 288 to 463 (NLEQYYAVVP…NLKQSMQNFA (176 aa)) enclose the Helicase C-terminal domain. Disordered regions lie at residues 512 to 615 (APQI…TKYD) and 771 to 859 (EKKK…LQGS). Residues 528-539 (PSKEELARKAEK) are compositionally biased toward basic and acidic residues. The span at 540–600 (EEEEEEERAV…GSDEETEEEK (61 aa)) shows a compositional bias: acidic residues. Positions 814-823 (SLSPSPAPSL) are enriched in low complexity.

The protein belongs to the DEAD box helicase family. DDX10/DBP4 subfamily. Interacts with the U3 and U14 snoRNAs. Associates with pre-ribosomal complexes.

It is found in the nucleus. Its subcellular location is the nucleolus. The catalysed reaction is ATP + H2O = ADP + phosphate + H(+). ATP-dependent RNA helicase required for ribosome biogenesis. Involved in the release of U14 snoRNA in pre-ribosomal complexes. Required for pre-rRNA cleavage at site A2. The chain is ATP-dependent RNA helicase DBP4 (DBP4) from Cryptococcus neoformans var. neoformans serotype D (strain B-3501A) (Filobasidiella neoformans).